A 264-amino-acid chain; its full sequence is 3-methyl-2-oxobutanoate hydroxymethyltransferase (264 aa).

Residues Asp45 and Asp84 each coordinate Mg(2+). Residues 45-46 (DS), Asp84, and Lys112 each bind 3-methyl-2-oxobutanoate. Residue Glu114 participates in Mg(2+) binding. Glu181 acts as the Proton acceptor in catalysis.

Belongs to the PanB family. In terms of assembly, homodecamer; pentamer of dimers. The cofactor is Mg(2+).

It localises to the cytoplasm. The enzyme catalyses 3-methyl-2-oxobutanoate + (6R)-5,10-methylene-5,6,7,8-tetrahydrofolate + H2O = 2-dehydropantoate + (6S)-5,6,7,8-tetrahydrofolate. Its pathway is cofactor biosynthesis; (R)-pantothenate biosynthesis; (R)-pantoate from 3-methyl-2-oxobutanoate: step 1/2. Functionally, catalyzes the reversible reaction in which hydroxymethyl group from 5,10-methylenetetrahydrofolate is transferred onto alpha-ketoisovalerate to form ketopantoate. The chain is 3-methyl-2-oxobutanoate hydroxymethyltransferase from Shewanella oneidensis (strain ATCC 700550 / JCM 31522 / CIP 106686 / LMG 19005 / NCIMB 14063 / MR-1).